The following is a 228-amino-acid chain: Ribose-5-phosphate isomerase A (228 aa).

Substrate contacts are provided by residues threonine 27 to threonine 30, aspartate 86 to aspartate 89, and lysine 100 to glycine 103. Glutamate 109 acts as the Proton acceptor in catalysis. Residue lysine 127 participates in substrate binding.

Belongs to the ribose 5-phosphate isomerase family. As to quaternary structure, homodimer.

It carries out the reaction aldehydo-D-ribose 5-phosphate = D-ribulose 5-phosphate. It functions in the pathway carbohydrate degradation; pentose phosphate pathway; D-ribose 5-phosphate from D-ribulose 5-phosphate (non-oxidative stage): step 1/1. In terms of biological role, catalyzes the reversible conversion of ribose-5-phosphate to ribulose 5-phosphate. This is Ribose-5-phosphate isomerase A from Borrelia hermsii (strain HS1 / DAH).